The following is a 415-amino-acid chain: Prostacyclin receptor (415 aa).

Positions 1 to 21 (MMASDGHPGPPSVTPGSPLSA) are disordered. Residues 1–44 (MMASDGHPGPPSVTPGSPLSAGGREWQGMAGSCWNITYVQDSVG) are Extracellular-facing. Intrachain disulfides connect cysteine 33/cysteine 193 and cysteine 120/cysteine 198. N-linked (GlcNAc...) asparagine glycosylation is present at asparagine 35. The helical transmembrane segment at 45-66 (PATSTLMFVAGVVGNGLALGIL) threads the bilayer. Over 67–79 (GARRRSHPSAFAV) the chain is Cytoplasmic. The helical transmembrane segment at 80–104 (LVTGLAVTDLLGTCFLSPAVFVAYA) threads the bilayer. Residues 105 to 122 (RNSSLLGLAHGGTMLCDT) lie on the Extracellular side of the membrane. A helical transmembrane segment spans residues 123–143 (FAFAMTFFGLASTLILFAMAV). Over 144–162 (ERCLALSHPYLYAQLDGPR) the chain is Cytoplasmic. Residues 163–186 (CARFALPSIYAFCCLFCSLPLLGL) form a helical membrane-spanning segment. Over 187–215 (GEHQQYCPGSWCFIRMRSAQPGGCAFSLA) the chain is Extracellular. Residues 216–236 (YASLMALLVTSIFFCNGSVTL) traverse the membrane as a helical segment. Topologically, residues 237–263 (SLYHMYRQQRRHHGSFVPTSRAREDEV) are cytoplasmic. Residues 264–288 (YHLILLALMTVIMAVCSLPLMIRGF) traverse the membrane as a helical segment. Residues 289 to 301 (TQAIAPDSREMGD) are Extracellular-facing. A helical membrane pass occupies residues 302–322 (LLAFRFNAFNPILDPWVFILF). Over 323-415 (RKAVFQRLKF…SEAIAACSLC (93 aa)) the chain is Cytoplasmic. The tract at residues 349-370 (PLSRPASGRRDPPAPTSLQAKE) is disordered. Serine 365 carries the post-translational modification Phosphoserine. Cysteine 412 carries the cysteine methyl ester modification. Cysteine 412 carries S-farnesyl cysteine lipidation. Positions 413–415 (SLC) are cleaved as a propeptide — removed in mature form.

It belongs to the G-protein coupled receptor 1 family. Interacts (non-isoprenylated C-terminus) with PDZK1. Post-translationally, isoprenylation does not influence ligand binding but is required for efficient coupling to the effectors adenylyl cyclase and phospholipase C.

It localises to the cell membrane. In terms of biological role, receptor for prostacyclin (prostaglandin I2 or PGI2). The activity of this receptor is mediated by G(s) proteins which activate adenylate cyclase. The chain is Prostacyclin receptor (Ptgir) from Mus musculus (Mouse).